We begin with the raw amino-acid sequence, 56 residues long: Large ribosomal subunit protein bL33A (56 aa).

Belongs to the bacterial ribosomal protein bL33 family.

The polypeptide is Large ribosomal subunit protein bL33A (Cutibacterium acnes (strain DSM 16379 / KPA171202) (Propionibacterium acnes)).